A 591-amino-acid chain; its full sequence is Heterogeneous nuclear ribonucleoprotein L-like (591 aa).

The interval 1 to 120 is disordered; that stretch reads MSSSSSSSPK…STEGGGSHHK (120 aa). A compositionally biased stretch (basic and acidic residues) spans 20–31; that stretch reads FESQAKRLKTEE. A Glycyl lysine isopeptide (Lys-Gly) (interchain with G-Cter in SUMO2) cross-link involves residue Lys-28. Ser-37 carries the phosphoserine modification. Thr-48 bears the Phosphothreonine mark. Positions 57-73 are enriched in gly residues; the sequence is SGGGDGGDGDGGSGGGG. Residues 74-91 are compositionally biased toward acidic residues; the sequence is DGEEGEGGEEGDEGDGDE. Residues 92–105 show a composition bias toward gly residues; that stretch reads GGSGGDEGGSGGGP. Ser-107, Ser-117, and Ser-124 each carry phosphoserine. 3 RRM domains span residues 125–199, 215–293, and 384–458; these read PVVH…YSTS, NKVL…YARP, and SVVM…VSKQ. Lys-540 is covalently cross-linked (Glycyl lysine isopeptide (Lys-Gly) (interchain with G-Cter in SUMO2)).

In terms of assembly, interacts with HNRNPL.

Functionally, RNA-binding protein that functions as a regulator of alternative splicing for multiple target mRNAs, including PTPRC/CD45 and STAT5A. Required for alternative splicing of PTPRC. The protein is Heterogeneous nuclear ribonucleoprotein L-like (Hnrnpll) of Mus musculus (Mouse).